Consider the following 604-residue polypeptide: Baculoviral IAP repeat-containing protein 3 (604 aa).

3 BIR repeats span residues 29–96 (ELYR…CRFV), 169–235 (ENAR…CPFI), and 255–322 (HAAR…CEYL). Zn(2+) is bound by residues Cys292, Cys295, His312, and Cys319. Positions 439 to 529 (KESNDLLLIR…VLYEHLFVQQ (91 aa)) constitute a CARD domain. The segment at 557 to 592 (CKVCMDKEVSIVFIPCGHLVVCKDCAPSLRKCPICR) adopts an RING-type zinc-finger fold.

The protein belongs to the IAP family. Interacts with PRSS25; interaction inhibits apoptotic suppressor activity. The BIR motifs region interacts with TNF receptor associated factors 1 and 2 (TRAF1 and TRAF2) to form a heteromeric complex, which is then recruited to the tumor necrosis factor receptor 2 (TNFR2). Interaction with TRAF2 is required for ubiquitination of IKBKE, degradation of NFKBIA and activation of NF-kappa-B. Interacts with RIP1, RIP2, RIP3, RIP4 and USP19. Auto-ubiquitinated and degraded by the proteasome in apoptotic cells. As to expression, highly expressed in fetal lung, and kidney. In the adult, expression is mainly seen in lymphoid tissues, including spleen, thymus and peripheral blood lymphocytes.

Its subcellular location is the cytoplasm. The protein localises to the nucleus. It carries out the reaction S-ubiquitinyl-[E2 ubiquitin-conjugating enzyme]-L-cysteine + [acceptor protein]-L-lysine = [E2 ubiquitin-conjugating enzyme]-L-cysteine + N(6)-ubiquitinyl-[acceptor protein]-L-lysine.. USP19 regulates the stability of BIRC3/c-IAP2 by preventing its ubiquitination. Its function is as follows. Multi-functional protein which regulates not only caspases and apoptosis, but also modulates inflammatory signaling and immunity, mitogenic kinase signaling and cell proliferation, as well as cell invasion and metastasis. Acts as an E3 ubiquitin-protein ligase regulating NF-kappa-B signaling and regulates both canonical and non-canonical NF-kappa-B signaling by acting in opposite directions: acts as a positive regulator of the canonical pathway and suppresses constitutive activation of non-canonical NF-kappa-B signaling. The target proteins for its E3 ubiquitin-protein ligase activity include: RIPK1, RIPK2, RIPK3, RIPK4, CASP3, CASP7, CASP8, IKBKE, TRAF1, and BCL10. Acts as an important regulator of innate immune signaling via regulation of Toll-like receptors (TLRs), Nodlike receptors (NLRs) and RIG-I like receptors (RLRs), collectively referred to as pattern recognition receptors (PRRs). Protects cells from spontaneous formation of the ripoptosome, a large multi-protein complex that has the capability to kill cancer cells in a caspase-dependent and caspase-independent manner. Suppresses ripoptosome formation by ubiquitinating RIPK1 and CASP8. The protein is Baculoviral IAP repeat-containing protein 3 (BIRC3) of Homo sapiens (Human).